The chain runs to 1029 residues: Collagen, type I, alpha 1b (1029 aa).

The tract at residues 1 to 990 (QMSYVDHSKS…KAPDPFRGGH (990 aa)) is disordered. Positions 13–33 (PPQPGPMGPMGPRGPPGPPGS) are enriched in pro residues. Over residues 34-57 (SGPQGFTGPPGEPGEPGASGAMGS) the composition is skewed to low complexity. Positions 67–81 (NGDDGEPGKPGRPGE) are enriched in basic and acidic residues. Composition is skewed to low complexity over residues 82–91 (RGAAGPQGAR), 120–129 (VPGVMGARGR), and 136–147 (SGARGNDGNTGP). The segment covering 163–182 (PGGAGAKGETGPAGGRGNEG) has biased composition (gly residues). 3 stretches are compositionally biased toward low complexity: residues 199-223 (AGPA…AGLA), 233-267 (AQGA…PGPA), and 299-309 (ERGAPGARGFP). A compositionally biased stretch (gly residues) spans 310–322 (GADGGAGGKGAPG). 2 stretches are compositionally biased toward low complexity: residues 323–351 (ERGA…PGSK) and 429–465 (VGAP…QGAT). A compositionally biased stretch (gly residues) spans 466 to 477 (GETGKGLGGPTG). Positions 478–497 (PRGAPGPAGNDGAKGEPGAA) are enriched in low complexity. 2 stretches are compositionally biased toward gly residues: residues 498-507 (GAPGGLGAPG) and 531-540 (GGKGGDGAPG). Composition is skewed to low complexity over residues 571–580 (VAGPTGPRGA) and 593–620 (AGFA…KGDA). Gly residues-rich tracts occupy residues 621–630 (GAPGPGGPVG) and 645–654 (GARGGAGPPG). Composition is skewed to low complexity over residues 655–665 (ATGFPGPAGRV), 694–722 (ETGA…PGXD), 731–743 (PQGL…LPGQ), 830–839 (APGAVGPSGK), and 855–869 (SGPA…PAGA). The span at 870–884 (KGDRGEAGEAGDRGG) shows a compositional bias: basic and acidic residues. Positions 906-934 (PAGASGPAGPRGPAGSNGAPGKDGMNGLP) are enriched in low complexity. Residues 952 to 967 (AGPPGPPGPAGPPGPP) show a composition bias toward pro residues. Residues 999 to 1029 (TQKLPLLDLAPMDVGAPDQEFGVEVGPVCFL) form the Fibrillar collagen NC1 domain.

Belongs to the fibrillar collagen family.

The protein resides in the secreted. Its subcellular location is the extracellular space. It localises to the extracellular matrix. In Epinephelus aeneus (White grouper), this protein is Collagen, type I, alpha 1b.